A 447-amino-acid polypeptide reads, in one-letter code: Dihydroorotase (447 aa).

2 residues coordinate Zn(2+): His-81 and His-83. Substrate contacts are provided by residues His-83–Arg-85 and Asn-115. Asp-171, His-198, and His-252 together coordinate Zn(2+). Asn-298 serves as a coordination point for substrate. Asp-325 is a Zn(2+) binding site. Asp-325 is an active-site residue. Substrate-binding positions include His-329 and Phe-343–Gly-344.

It belongs to the metallo-dependent hydrolases superfamily. DHOase family. Class I DHOase subfamily. Zn(2+) serves as cofactor.

It carries out the reaction (S)-dihydroorotate + H2O = N-carbamoyl-L-aspartate + H(+). The protein operates within pyrimidine metabolism; UMP biosynthesis via de novo pathway; (S)-dihydroorotate from bicarbonate: step 3/3. Its function is as follows. Catalyzes the reversible cyclization of carbamoyl aspartate to dihydroorotate. This Ehrlichia canis (strain Jake) protein is Dihydroorotase.